The following is a 490-amino-acid chain: Adenylosuccinate synthetase, chloroplastic (490 aa).

A chloroplast-targeting transit peptide spans 1-45 (MSLSSLTLDSNPRFAVGGPYHRRYPPLHHPRSFVSCSAKRPAVSA). S46 is modified (N-acetylserine). GTP contacts are provided by residues 77–83 (GDEGKGK) and 105–107 (GHT). D78 functions as the Proton acceptor in the catalytic mechanism. Mg(2+) contacts are provided by D78 and G105. Residues 78-81 (DEGK), 103-106 (NAGH), T195, R209, Q289, T304, and R368 contribute to the IMP site. The active-site Proton donor is H106. Substrate is bound at residue 364–370 (TTTGRPR). Residues R370, 396 to 398 (KLD), and 479 to 481 (GIG) contribute to the GTP site.

It belongs to the adenylosuccinate synthetase family. As to quaternary structure, homodimer. Mg(2+) is required as a cofactor.

The protein localises to the plastid. Its subcellular location is the chloroplast. It carries out the reaction IMP + L-aspartate + GTP = N(6)-(1,2-dicarboxyethyl)-AMP + GDP + phosphate + 2 H(+). Its pathway is purine metabolism; AMP biosynthesis via de novo pathway; AMP from IMP: step 1/2. Plays an important role in the de novo pathway and in the salvage pathway of purine nucleotide biosynthesis. Catalyzes the first committed step in the biosynthesis of AMP from IMP. This Arabidopsis thaliana (Mouse-ear cress) protein is Adenylosuccinate synthetase, chloroplastic.